A 228-amino-acid polypeptide reads, in one-letter code: Ribosomal RNA small subunit methyltransferase G (228 aa).

Residues G89, L94, 140–141 (VE), and R159 contribute to the S-adenosyl-L-methionine site.

This sequence belongs to the methyltransferase superfamily. RNA methyltransferase RsmG family.

The protein localises to the cytoplasm. The catalysed reaction is guanosine(527) in 16S rRNA + S-adenosyl-L-methionine = N(7)-methylguanosine(527) in 16S rRNA + S-adenosyl-L-homocysteine. Specifically methylates the N7 position of guanine in position 527 of 16S rRNA. The chain is Ribosomal RNA small subunit methyltransferase G from Burkholderia cenocepacia (strain HI2424).